The sequence spans 631 residues: Tumor protein p73 (631 aa).

The interval 1–43 is transactivation; sequence MAQTSSSSSSTFEHLWSSLEPDSTYFDLPQPSQGTSEASGSEE. Disordered regions lie at residues 23–43 and 69–113; these read STYF…GSEE and SRAA…NTDY. The residue at position 24 (threonine 24) is a Phosphothreonine; by PLK1. Tyrosine 25 is subject to Phosphotyrosine; by SRC and HCK. Polar residues-rich tracts occupy residues 30-43 and 86-100; these read QPSQ…GSEE and PTHS…TFDT. Tyrosine 91 bears the Phosphotyrosine; by ABL1 mark. Positions 123–302 are DNA-binding; it reads FQQSSTAKSA…DRKADEDHYR (180 aa). Zn(2+) contacts are provided by cysteine 186, histidine 189, cysteine 250, and cysteine 254. Residues 306–315 are compositionally biased toward polar residues; that stretch reads ALNESTTKNG. The tract at residues 306–334 is disordered; that stretch reads ALNESTTKNGAASKRAFKQSPPAIPALGT. The interaction with HIPK2 stretch occupies residues 337-372; sequence KKRRHGDEDMFYMHVRGRENFEILMKVKESLELMEL. The segment at 337–378 is oligomerization; that stretch reads KKRRHGDEDMFYMHVRGRENFEILMKVKESLELMELVPQPLV. The PPxY motif motif lies at 477-481; that stretch reads PPPPY. The region spanning 479–545 is the SAM domain; it reads PPYHADPSLV…WRGLQDLKQS (67 aa). A Glycyl lysine isopeptide (Lys-Gly) (interchain with G-Cter in SUMO); alternate cross-link involves residue lysine 622. Lysine 622 participates in a covalent cross-link: Glycyl lysine isopeptide (Lys-Gly) (interchain with G-Cter in SUMO2); alternate.

The protein belongs to the p53 family. Found in a complex with p53/TP53 and CABLES1. The C-terminal oligomerization domain binds to the ABL1 tyrosine kinase SH3 domain. Interacts with HECW2, HIPK2, RANBP9 and WWOX. Interacts (via SAM domain) with FBXO45 (via B30.2/SPRY domain). Interacts with YAP1 (phosphorylated form). Interacts with HCK (via SH3 domain); this inhibits TP73 activity and degradation. Interacts (via SAM domain) with NQO1; this interaction is NADH-dependent, stabilizes TP73 in response to oxidative stress and protects it from ubiquitin-independent degradation by the 20S proteasome. The cofactor is Zn(2+). In terms of processing, sumoylated on Lys-622, which potentiates proteasomal degradation but does not affect transcriptional activity. Post-translationally, phosphorylation by PLK1 and PLK3 inhibits the transcription regulator activity and pro-apoptotic function. Higher levels of phosphorylation seen in striatal neurons of. mutant huntingtin (htt) transgenic mice. Polyubiquitinated by RCHY1/PIRH2; leading to its degradation by the proteasome. As to expression, found in striatal neurons of mutant huntingtin (htt) transgenic mice (at protein level). Isoform 1 is expressed in the nasal epithelium, the vomeronasal organ, the hippocampus and the hypothalamus.

The protein localises to the nucleus. The protein resides in the cytoplasm. In terms of biological role, participates in the apoptotic response to DNA damage. Isoforms containing the transactivation domain are pro-apoptotic, isoforms lacking the domain are anti-apoptotic and block the function of p53 and transactivating p73 isoforms. May be a tumor suppressor protein. Is an activator of FOXJ1 expression, essential for the positive regulation of lung ciliated cell differentiation. The polypeptide is Tumor protein p73 (Tp73) (Mus musculus (Mouse)).